A 319-amino-acid chain; its full sequence is Taste receptor type 2 member 14 (319 aa).

The Extracellular segment spans residues 1 to 7 (MDGVIKS). Residues 8–28 (IFTFILILEFIIGNLGNSFIV) form a helical membrane-spanning segment. At 29–55 (LVNCIDWVKRRKISLVDQLLIALAISR) the chain is on the cytoplasmic side. The chain crosses the membrane as a helical span at residues 56 to 76 (ISLVWSIFGSWCVSVVFPALF). Over 77 to 87 (ATEKLLRMLTN) the chain is Extracellular. Threonine 86 and tryptophan 89 together coordinate cholesterol. A helical transmembrane segment spans residues 88–108 (IWTVTNHFSVWLATILGTFYF). The Cytoplasmic segment spans residues 109-129 (LKIANFSNSIFLYLKWRVKKV). A helical transmembrane segment spans residues 130-150 (VLVLLLVTLVLLFLNILLINI). At 151-184 (HINASINGYRGNMTCSSASCNFIRFSSAIALTST) the chain is on the extracellular side. 2 N-linked (GlcNAc...) asparagine glycosylation sites follow: asparagine 153 and asparagine 162. Residue alanine 180 coordinates cholesterol. Residues 185 to 205 (VFILIPFTLSLATFLLLSFSL) traverse the membrane as a helical segment. At 206–232 (WKHRKKMQHTVKGYRDVSTKAHRGVMQ) the chain is on the cytoplasmic side. The helical transmembrane segment at 233-253 (TVITFLLLYAVFFLTFFVSIW) threads the bilayer. The Extracellular segment spans residues 254–261 (ISERLKEN). Residues 262-282 (QIIILSEMMGLAYPSGHSCVL) traverse the membrane as a helical segment. The cholesterol site is built by isoleucine 265 and glutamate 268. Over 283-317 (ILGNKKLRQASLSVLWWLRYRFKDGELSGHKEFRE) the chain is Cytoplasmic.

Belongs to the G-protein coupled receptor T2R family. In terms of assembly, core component of the TAS2R14-GNAI1 complex, consisting of TAS2R14, GNAI1, GNB1 and GNG2; within the complex interacts with GNAI1. Core component of the TAS2R14-GNAT3 complex, consisting of TAS2R14, GNAT3, GNB1 and GNG2; within the complex interacts with GNAT3. Core component of the TAS2R14-GNAS2 complex, consisting of TAS2R14, GNAS2, GNB1 and GNG2; within the complex interacts with GNAS2.

The protein localises to the membrane. The enzyme catalyses Ca(2+)(in) = Ca(2+)(out). It carries out the reaction 3',5'-cyclic AMP(in) = 3',5'-cyclic AMP(out). Its activity is regulated as follows. Basal activity is enhanced by binding to bitter tastants, such as flufenamic acid and aristolochic acid. Regulated by cholesterol in a concentration-dependent manner. In terms of biological role, gustducin-linked G-protein coupled receptor that plays a role in the perception of bitterness. The activity of this receptor stimulates GNAT3, activating the gustducin G-protein pathway. Likely plays a role in sensing the chemical composition of the gastrointestinal content and other extra-oral tissues via the inhibitory G-protein pathways. The sequence is that of Taste receptor type 2 member 14 (TAS2R14) from Papio hamadryas (Hamadryas baboon).